The sequence spans 248 residues: Probable transcriptional regulatory protein BOV_1660 (248 aa).

Belongs to the TACO1 family.

The protein resides in the cytoplasm. This Brucella ovis (strain ATCC 25840 / 63/290 / NCTC 10512) protein is Probable transcriptional regulatory protein BOV_1660.